Consider the following 284-residue polypeptide: 2-dehydro-3-deoxyphosphooctonate aldolase (284 aa).

The protein belongs to the KdsA family.

Its subcellular location is the cytoplasm. The enzyme catalyses D-arabinose 5-phosphate + phosphoenolpyruvate + H2O = 3-deoxy-alpha-D-manno-2-octulosonate-8-phosphate + phosphate. It participates in carbohydrate biosynthesis; 3-deoxy-D-manno-octulosonate biosynthesis; 3-deoxy-D-manno-octulosonate from D-ribulose 5-phosphate: step 2/3. The protein operates within bacterial outer membrane biogenesis; lipopolysaccharide biosynthesis. This chain is 2-dehydro-3-deoxyphosphooctonate aldolase, found in Salmonella enteritidis PT4 (strain P125109).